A 634-amino-acid chain; its full sequence is Chaperone protein HtpG (634 aa).

Positions 1–342 (MTVDTDKQTL…SADLSLNVSR (342 aa)) are a; substrate-binding. A b region spans residues 343–559 (EILQSGPVVD…QGDLGLQMRQ (217 aa)). The segment at 560-634 (LLEASGQAVP…LNKLLLELSA (75 aa)) is c.

This sequence belongs to the heat shock protein 90 family. As to quaternary structure, homodimer.

The protein resides in the cytoplasm. In terms of biological role, molecular chaperone. Has ATPase activity. The polypeptide is Chaperone protein HtpG (Xanthomonas campestris pv. campestris (strain ATCC 33913 / DSM 3586 / NCPPB 528 / LMG 568 / P 25)).